We begin with the raw amino-acid sequence, 394 residues long: Lipoyl synthase, chloroplastic (394 aa).

The transit peptide at 1–36 (MMHHCSITKPTFSISISTQKLHHHSSKFLNLGFRIR) directs the protein to the chloroplast. The [4Fe-4S] cluster site is built by Cys-127, Cys-132, Cys-138, Cys-158, Cys-162, Cys-165, and Ser-373. In terms of domain architecture, Radical SAM core spans 141-362 (GGGDGVATAT…KTYGESIGFR (222 aa)).

The protein belongs to the radical SAM superfamily. Lipoyl synthase family. It depends on [4Fe-4S] cluster as a cofactor. As to expression, expressed in roots, leaves and flowers.

The protein resides in the plastid. It localises to the chloroplast. It catalyses the reaction [[Fe-S] cluster scaffold protein carrying a second [4Fe-4S](2+) cluster] + N(6)-octanoyl-L-lysyl-[protein] + 2 oxidized [2Fe-2S]-[ferredoxin] + 2 S-adenosyl-L-methionine + 4 H(+) = [[Fe-S] cluster scaffold protein] + N(6)-[(R)-dihydrolipoyl]-L-lysyl-[protein] + 4 Fe(3+) + 2 hydrogen sulfide + 2 5'-deoxyadenosine + 2 L-methionine + 2 reduced [2Fe-2S]-[ferredoxin]. Its pathway is protein modification; protein lipoylation via endogenous pathway; protein N(6)-(lipoyl)lysine from octanoyl-[acyl-carrier-protein]: step 2/2. Functionally, catalyzes the radical-mediated insertion of two sulfur atoms into the C-6 and C-8 positions of the octanoyl moiety bound to the lipoyl domains of lipoate-dependent enzymes, thereby converting the octanoylated domains into lipoylated derivatives. Together with LIP2P and LIP2P2 is essential for de novo plastidial protein lipoylation during seed development. This is Lipoyl synthase, chloroplastic from Arabidopsis thaliana (Mouse-ear cress).